The sequence spans 317 residues: Tricarboxylate transport protein B, mitochondrial (317 aa).

Residues 1–20 (MSGSPKFVSPFHRPHCLSAA) constitute a propeptide, removed in mature form. Solcar repeat units lie at residues 29-117 (THPG…LSNQ), 128-214 (TRGL…LRNW), and 224-309 (INPV…VVKV). 4 helical membrane-spanning segments follow: residues 35–55 (ILAG…TEYV), 130–150 (GLIC…CPME), 223–243 (SINP…SVFG), and 294–314 (MDVA…NKVW).

The protein belongs to the mitochondrial carrier (TC 2.A.29) family. In terms of processing, possesses a short cleavable presequence, which, however, is found to be dispensable both for targeting to mitochondria and insertion into the inner membrane. However, the presequence is required to keep SLC25A1 in a soluble state and thus in an import-competent state. Mature SLC25A1 lacking the presequence is prone to aggregation.

The protein resides in the mitochondrion inner membrane. The enzyme catalyses (S)-malate(in) + citrate(out) = (S)-malate(out) + citrate(in). It carries out the reaction D-threo-isocitrate(in) + citrate(out) = D-threo-isocitrate(out) + citrate(in). The catalysed reaction is citrate(out) + succinate(in) = citrate(in) + succinate(out). It catalyses the reaction cis-aconitate(in) + citrate(out) = cis-aconitate(out) + citrate(in). The enzyme catalyses trans-aconitate(in) + citrate(out) = trans-aconitate(out) + citrate(in). It carries out the reaction phosphoenolpyruvate(in) + citrate(out) = phosphoenolpyruvate(out) + citrate(in). The catalysed reaction is maleate(in) + citrate(out) = maleate(out) + citrate(in). Functionally, mitochondrial electroneutral antiporter that exports citrate from the mitochondria into the cytosol in exchange for malate. Also able to mediate the exchange of citrate for isocitrate, phosphoenolpyruvate, cis-aconitate and to a lesser extent trans-aconitate, maleate and succinate. In the cytoplasm, citrate plays important roles in fatty acid and sterol synthesis, regulation of glycolysis, protein acetylation, and other physiopathological processes. This Danio rerio (Zebrafish) protein is Tricarboxylate transport protein B, mitochondrial.